A 218-amino-acid chain; its full sequence is Protein-methionine-sulfoxide reductase heme-binding subunit MsrQ (218 aa).

A run of 5 helical transmembrane segments spans residues 14 to 34 (AVHAAVLAPIALLGWQFWQVW), 60 to 80 (LLLITLAITPLRQLTGQAVLI), 86 to 106 (LGLYAFFYASVHLTAYLWLDL), 121 to 141 (PYITVGFTAWLLLVPLAITST), and 155 to 175 (LHMLIYPIGLLAVLHFWWLVK).

This sequence belongs to the MsrQ family. Heterodimer of a catalytic subunit (MsrP) and a heme-binding subunit (MsrQ). FMN serves as cofactor. Requires heme b as cofactor.

The protein resides in the cell inner membrane. In terms of biological role, part of the MsrPQ system that repairs oxidized periplasmic proteins containing methionine sulfoxide residues (Met-O), using respiratory chain electrons. Thus protects these proteins from oxidative-stress damage caused by reactive species of oxygen and chlorine generated by the host defense mechanisms. MsrPQ is essential for the maintenance of envelope integrity under bleach stress, rescuing a wide series of structurally unrelated periplasmic proteins from methionine oxidation. MsrQ provides electrons for reduction to the reductase catalytic subunit MsrP, using the quinone pool of the respiratory chain. The polypeptide is Protein-methionine-sulfoxide reductase heme-binding subunit MsrQ (Xanthomonas campestris pv. campestris (strain 8004)).